The primary structure comprises 241 residues: ATP synthase subunit a (241 aa).

6 consecutive transmembrane segments (helical) span residues 19–39, 80–100, 106–126, 135–155, 177–197, and 203–223; these read AVLI…AKMA, LVAA…IPGF, NINV…YEGI, FAHF…IEIV, LFLW…AYLL, and LLQT…AVAI.

This sequence belongs to the ATPase A chain family. As to quaternary structure, F-type ATPases have 2 components, CF(1) - the catalytic core - and CF(0) - the membrane proton channel. CF(1) has five subunits: alpha(3), beta(3), gamma(1), delta(1), epsilon(1). CF(0) has three main subunits: a(1), b(2) and c(9-12). The alpha and beta chains form an alternating ring which encloses part of the gamma chain. CF(1) is attached to CF(0) by a central stalk formed by the gamma and epsilon chains, while a peripheral stalk is formed by the delta and b chains.

The protein localises to the cell inner membrane. In terms of biological role, key component of the proton channel; it plays a direct role in the translocation of protons across the membrane. The chain is ATP synthase subunit a from Sulfurovum sp. (strain NBC37-1).